Here is a 452-residue protein sequence, read N- to C-terminus: Putative purine permease CPE0397 (452 aa).

12 consecutive transmembrane segments (helical) span residues 34–54, 58–78, 83–103, 108–128, 138–158, 172–192, 201–221, 250–270, 326–346, 348–368, 383–403, and 412–432; these read IFAA…SLGF, VTTA…IIQA, KVGA…SPAI, VLGL…EVIL, FFPP…LLPV, YASL…LLLN, SASI…LGLV, MAFI…LKAI, AVMA…AAII, GIPN…VAAA, LLII…PDVI, and MIFS…NAVL.

This sequence belongs to the nucleobase:cation symporter-2 (NCS2) (TC 2.A.40) family.

The protein resides in the cell membrane. The protein is Putative purine permease CPE0397 (cpx) of Clostridium perfringens (strain 13 / Type A).